The following is a 497-amino-acid chain: Glycerol kinase (497 aa).

Position 12 (Thr12) interacts with ADP. ATP contacts are provided by Thr12, Thr13, and Ser14. Thr12 is a sn-glycerol 3-phosphate binding site. Arg16 is an ADP binding site. Residues Arg82, Glu83, Tyr134, and Asp243 each contribute to the sn-glycerol 3-phosphate site. 5 residues coordinate glycerol: Arg82, Glu83, Tyr134, Asp243, and Gln244. ADP-binding residues include Thr265 and Gly308. 4 residues coordinate ATP: Thr265, Gly308, Gln312, and Gly411. Position 411 (Gly411) interacts with ADP.

Belongs to the FGGY kinase family.

It catalyses the reaction glycerol + ATP = sn-glycerol 3-phosphate + ADP + H(+). It participates in polyol metabolism; glycerol degradation via glycerol kinase pathway; sn-glycerol 3-phosphate from glycerol: step 1/1. With respect to regulation, inhibited by fructose 1,6-bisphosphate (FBP). Functionally, key enzyme in the regulation of glycerol uptake and metabolism. Catalyzes the phosphorylation of glycerol to yield sn-glycerol 3-phosphate. This is Glycerol kinase from Rhizobium meliloti (strain 1021) (Ensifer meliloti).